The chain runs to 538 residues: MGLLLLLLILTPLLAAYCHPDFRLLEKAQQLLQSTGSPYSTNCWLCTSSSSKTPGRAYPASSREWTTIEAELHISYQWDPNLKGLIRLANSLLSKVKQDFPDIRKEPPIFGPIFTNVNLIGIAPICVTAKRKDGTNVGTLPSTVCNVTLTVDPNQQTYQKYAHNQFHHQPRFPKPPNITFPQGTLLDKSTRFCQGRPSSCSTRNFWFQPADYNQCLQIPNLSSTAEWVLLDQTRNSLFWENKTKGANQSQTPCVQVLAGMTIATSYLSTSAVSEFSGTSVTSLFSFHISTCLKTQGAFYICGQSIHQCLPTNWTGTCTIGYVSPDIFIAPGNLSLPIPIYGNFHFPRVKRAIHLIPLLVGLGIVGSAGTGIAGIAKASFTYSQLSKEIANNIEAMAKTLTTVQEQIDSLAAVVLQNRRGLDMLTAAQGGICLALDEKCCFWVNQSGKVQDNIRQLLNRASTLQEQATQGWLNWEGTWKWFSWVLPFTGPLVSLLLLLLFGPCLLNLITQFVSSRLQATKLQMKLNKRVHPRNSQESPF.

A signal peptide spans 1 to 15; that stretch reads MGLLLLLLILTPLLA. The Extracellular segment spans residues 16-478; sequence AYCHPDFRLL…GWLNWEGTWK (463 aa). A CXXC motif is present at residues 43 to 46; that stretch reads CWLC. Disulfide bonds link Cys-43-Cys-46, Cys-43-Cys-439, and Cys-431-Cys-438. Asn-146, Asn-177, Asn-220, Asn-241, Asn-247, Asn-312, and Asn-332 each carry an N-linked (GlcNAc...) asparagine glycan. Residues 354-374 form a fusion peptide region; sequence LIPLLVGLGIVGSAGTGIAGI. A CKS-17 motif is present at residues 414 to 430; sequence LQNRRGLDMLTAAQGGI. The CX6CC signature appears at 431-439; it reads CLALDEKCC. N-linked (GlcNAc...) asparagine glycosylation occurs at Asn-443. A helical transmembrane segment spans residues 479–499; it reads WFSWVLPFTGPLVSLLLLLLF. The Cytoplasmic portion of the chain corresponds to 500–538; it reads GPCLLNLITQFVSSRLQATKLQMKLNKRVHPRNSQESPF.

Belongs to the gamma type-C retroviral envelope protein family. HERV class-I FRD env subfamily. In terms of assembly, the surface and transmembrane proteins form a heterodimer. They are attached by non-covalent interactions or by a labile interchain disulfide bond. In terms of processing, specific enzymatic cleavages in vivo yield the mature SU and TM proteins. Post-translationally, the CXXC motif is highly conserved across a broad range of retroviral envelope proteins. It is thought to participate in the formation of a labile disulfide bond possibly with the CX6CC motif present in the transmembrane protein.

The protein localises to the virion. It is found in the cell membrane. Functionally, this endogenous retroviral envelope protein has retained its original fusogenic properties and participates in trophoblast fusion and the formation of a syncytium during placenta morphogenesis. The interaction with MFSD2A is apparently important for this process. Endogenous envelope proteins may have kept, lost or modified their original function during evolution but this one can still make pseudotypes with MLV, HIV-1 or SIV-1 virions and confer infectivity. Retroviral envelope proteins mediate receptor recognition and membrane fusion during early infection. The surface protein mediates receptor recognition, while the transmembrane protein anchors the envelope heterodimer to the viral membrane through one transmembrane domain. The other hydrophobic domain, called fusion peptide, mediates fusion of the viral membrane with the target cell membrane. The sequence is that of Syncytin-2 (ERVFRD-1) from Callithrix jacchus (White-tufted-ear marmoset).